A 278-amino-acid polypeptide reads, in one-letter code: Trans-2,3-dihydro-3-hydroxyanthranilate isomerase (278 aa).

Residue Glu-45 is part of the active site.

This sequence belongs to the PhzF family.

The enzyme catalyses (5S,6S)-6-amino-5-hydroxycyclohexa-1,3-diene-1-carboxyate = (1R,6S)-6-amino-5-oxocyclohex-2-ene-1-carboxylate. It participates in secondary metabolite biosynthesis; pyocyanine biosynthesis. In terms of biological role, isomerase that catalyzes the condensation of two molecules of trans-2,3-dihydro-3-hydroxyanthranilic acid (DHHA) into the phenazine ring system. The final product is not yet known. This Pseudomonas aeruginosa (strain ATCC 15692 / DSM 22644 / CIP 104116 / JCM 14847 / LMG 12228 / 1C / PRS 101 / PAO1) protein is Trans-2,3-dihydro-3-hydroxyanthranilate isomerase (phzF1).